The primary structure comprises 351 residues: Small ribosomal subunit biogenesis GTPase RsgA (351 aa).

A CP-type G domain is found at 107–277 (ENLLQRPDNF…LIDSPGIREF (171 aa)). Residues 163 to 166 (NKTD) and 219 to 227 (GQSGVGKSS) contribute to the GTP site. Residues C301, C306, H308, and C314 each contribute to the Zn(2+) site.

This sequence belongs to the TRAFAC class YlqF/YawG GTPase family. RsgA subfamily. Monomer. Associates with 30S ribosomal subunit, binds 16S rRNA. Zn(2+) serves as cofactor.

Its subcellular location is the cytoplasm. Functionally, one of several proteins that assist in the late maturation steps of the functional core of the 30S ribosomal subunit. Helps release RbfA from mature subunits. May play a role in the assembly of ribosomal proteins into the subunit. Circularly permuted GTPase that catalyzes slow GTP hydrolysis, GTPase activity is stimulated by the 30S ribosomal subunit. The polypeptide is Small ribosomal subunit biogenesis GTPase RsgA (Marinobacter nauticus (strain ATCC 700491 / DSM 11845 / VT8) (Marinobacter aquaeolei)).